Here is a 625-residue protein sequence, read N- to C-terminus: tRNA uridine 5-carboxymethylaminomethyl modification enzyme MnmG (625 aa).

Residue 13–18 (GGGHAG) coordinates FAD. 273 to 287 (GPRYCPSIEDKVVRF) provides a ligand contact to NAD(+).

Belongs to the MnmG family. As to quaternary structure, homodimer. Heterotetramer of two MnmE and two MnmG subunits. Requires FAD as cofactor.

Its subcellular location is the cytoplasm. NAD-binding protein involved in the addition of a carboxymethylaminomethyl (cmnm) group at the wobble position (U34) of certain tRNAs, forming tRNA-cmnm(5)s(2)U34. The polypeptide is tRNA uridine 5-carboxymethylaminomethyl modification enzyme MnmG (Methylococcus capsulatus (strain ATCC 33009 / NCIMB 11132 / Bath)).